The chain runs to 257 residues: MTEFVVAIPARYAASRLPGKPLRLLGGEPLVLHVARRALQAGAGEVWVATDDQRIADALSGLAEVKVAMTAASHASGTDRLAECARIAGWADDTVVVNLQGDEPFAPAAGIRAVAEALVGGNAPMSTLATTVEDAHTLFDPNVVKLVRNVRNEAMYFSRAPIAWHRDGFARSRDTLPAGHNWLRHIGIYGYRAGFLQQFAAMPPGQLEQVESLEQLRVLEAGFPISVAISPEPFPPGIDTPEDLERAEVLLQAMAAR.

The protein belongs to the KdsB family.

Its subcellular location is the cytoplasm. The catalysed reaction is 3-deoxy-alpha-D-manno-oct-2-ulosonate + CTP = CMP-3-deoxy-beta-D-manno-octulosonate + diphosphate. The protein operates within nucleotide-sugar biosynthesis; CMP-3-deoxy-D-manno-octulosonate biosynthesis; CMP-3-deoxy-D-manno-octulosonate from 3-deoxy-D-manno-octulosonate and CTP: step 1/1. It functions in the pathway bacterial outer membrane biogenesis; lipopolysaccharide biosynthesis. Its function is as follows. Activates KDO (a required 8-carbon sugar) for incorporation into bacterial lipopolysaccharide in Gram-negative bacteria. This Stenotrophomonas maltophilia (strain R551-3) protein is 3-deoxy-manno-octulosonate cytidylyltransferase.